We begin with the raw amino-acid sequence, 184 residues long: Adenine phosphoribosyltransferase (184 aa).

The protein belongs to the purine/pyrimidine phosphoribosyltransferase family. As to quaternary structure, homodimer.

It localises to the cytoplasm. It carries out the reaction AMP + diphosphate = 5-phospho-alpha-D-ribose 1-diphosphate + adenine. It participates in purine metabolism; AMP biosynthesis via salvage pathway; AMP from adenine: step 1/1. Its function is as follows. Catalyzes a salvage reaction resulting in the formation of AMP, that is energically less costly than de novo synthesis. The sequence is that of Adenine phosphoribosyltransferase from Parafrankia sp. (strain EAN1pec).